The sequence spans 158 residues: Glycine/sarcosine/betaine reductase complex component A (158 aa).

Selenocysteine 44 is an active-site residue. Residue selenocysteine 44 is a non-standard amino acid, selenocysteine.

Belongs to the GrdA family. In terms of assembly, monomer. Component of the glycine, sarcosine and betaine reductase complexes, together with components B and C.

The enzyme catalyses acetyl phosphate + [thioredoxin]-disulfide + NH4(+) + H2O = [thioredoxin]-dithiol + glycine + phosphate + H(+). The catalysed reaction is acetyl phosphate + methylamine + [thioredoxin]-disulfide + H2O = sarcosine + [thioredoxin]-dithiol + phosphate + H(+). It carries out the reaction acetyl phosphate + trimethylamine + [thioredoxin]-disulfide + H2O = glycine betaine + [thioredoxin]-dithiol + phosphate + H(+). Its function is as follows. In the first step of glycine, betaine and sarcosine reductases, the substrate is bound to component PB via a Schiff base intermediate. Then the PB-activated substrate is nucleophilically attacked by the selenol anion of component PA to transform it to a carboxymethylated selenoether and the respective amine. By action of component PC, acetyl phosphate is formed, leaving component PA in its oxidized state. Finally component PA becomes reduced by the thioredoxin system to start a new catalytic cycle of reductive deamination. This is Glycine/sarcosine/betaine reductase complex component A (grdA) from Acetoanaerobium sticklandii (strain ATCC 12662 / DSM 519 / JCM 1433 / CCUG 9281 / NCIMB 10654 / HF) (Clostridium sticklandii).